A 1330-amino-acid chain; its full sequence is MSRLIFEARRRLAPPSSHQGTIIIEAPPELPRVIPPSLLRRALPYLIGILIVGMIVALVATGMRVISPQTLFFPFVLLLAATALYRGNDKKMRTEEVDAERADYLRYLSVVRDNIRAQAAEQRASALWSHPDPTALASVPGSRRQWERDPHDPDFLVLRAGRHTVPLATTLRVNDTADEIDLEPVSHSALRSLLDTQRSIGDVPTGIDLTKVSPITVLGERAQVRAVLRAWIAQAVTWHDPTVLGVALAARDLEGRDWNWLKWLPHVDIPGRLDALGPARNLSTDPDELIALLGPVLADRPAFTGQPTDALRHLLIVVDDPDYDLGASPLAVGRAGVTVVHCSASAPHREQYSDPEKPILRVAHGAIERWQTGGWQPYIDAADQFSADEAAHLARRLSRWDSNPTHAGLRSAATRGASFTTLLGIEDASRLDVPALWAPRRRDEELRVPIGVTGTGEPLMFDLKDEAEGGMGPHGLMIGMTGSGKSQTLMSILLSLLTTHSAERLIVIYADFKGEAGADSFRDFPQVVAVISNMAEKKSLADRFADTLRGEVARREMLLREAGRKVQGSAFNSVLEYENAIAAGHSLPPIPTLFVVADEFTLMLADHPEYAELFDYVARKGRSFRIHILFASQTLDVGKIKDIDKNTAYRIGLKVASPSVSRQIIGVEDAYHIESGKEHKGVGFLVPAPGATPIRFRSTYVDGIYEPPQTAKAVVVQSVPEPKLFTAAAVEPDPGTVIADTDEQEPADPPRKLIATIGEQLARYGPRAPQLWLPPLDETIPLSAALARAGVGPRQWRWPLGEIDRPFEMRRDPLVFDARSSAGNMVIHGGPKSGKSTALQTFILSAASLHSPHEVSFYCLDYGGGQLRALQDLAHVGSVASALEPERIRRTFGELEQLLLSRQQREVFRDRGANGSTPDDGFGEVFLVIDNLYGFGRDNTDQFNTRNPLLARVTELVNVGLAYGIHVIITTPSWLEVPLAMRDGLGLRLELRLHDARDSNVRVVGALRRPADAVPHDQPGRGLTMAAEHFLFAAPELDAQTNPVAAINARYPGMAAPPVRLLPTNLAPHAVGELYRGPDQLVIGQREEDLAPVILDLAANPLLMVFGDARSGKTTLLRHIIRTVREHSTADRVAFTVLDRRLHLVDEPLFPDNEYTANIDRIIPAMLGLANLIEARRPPAGMSAAELSRWTFAGHTHYLIIDDVDQVPDSPAMTGPYIGQRPWTPLIGLLAQAGDLGLRVIVTGRATGSAHLLMTSPLLRRFNDLQATTLMLAGNPADSGKIRGERFARLPAGRAILLTDSDSPTYVQLINPLVDAAAVSGETQQKGSQS.

The next 2 helical transmembrane spans lie at 43–63 (LPYL…ATGM) and 65–85 (VISP…TALY). 3 consecutive FtsK domains span residues 456–662 (GEPL…SVSR), 811–1000 (RDPL…RDSN), and 1090–1280 (LAPV…ADSG). ATP contacts are provided by residues 479-486 (GMTGSGKS), 829-836 (GGPKSGKS), and 1107-1114 (GDARSGKT).

As to quaternary structure, part of the ESX-3 / type VII secretion system (T7SS), which is composed of cytosolic and membrane components. The ESX-3 membrane complex is composed of EccB3, EccC3, EccD3 and EccE3.

The protein localises to the cell inner membrane. In terms of biological role, part of the ESX-3 specialized secretion system, which is important for iron and zinc uptake or homeostasis. The polypeptide is ESX-3 secretion system protein EccC3 (Mycobacterium tuberculosis (strain ATCC 25618 / H37Rv)).